Here is a 188-residue protein sequence, read N- to C-terminus: dCTP deaminase (188 aa).

DCTP-binding positions include 111-116 (KSTYAR), 135-137 (TLE), Gln156, Tyr170, Lys179, and Gln180. The active-site Proton donor/acceptor is Glu137.

It belongs to the dCTP deaminase family. As to quaternary structure, homotrimer.

The catalysed reaction is dCTP + H2O + H(+) = dUTP + NH4(+). Its pathway is pyrimidine metabolism; dUMP biosynthesis; dUMP from dCTP (dUTP route): step 1/2. In terms of biological role, catalyzes the deamination of dCTP to dUTP. This chain is dCTP deaminase, found in Rickettsia bellii (strain OSU 85-389).